The following is a 506-amino-acid chain: Cysteine--tRNA ligase (506 aa).

Residue Cys-34 participates in Zn(2+) binding. The short motif at 36-46 (PTVYDFAHIGN) is the 'HIGH' region element. Cys-230, His-269, and Glu-273 together coordinate Zn(2+). A 'KMSKS' region motif is present at residues 302-306 (KMSKS). Lys-305 serves as a coordination point for ATP.

It belongs to the class-I aminoacyl-tRNA synthetase family. In terms of assembly, monomer. The cofactor is Zn(2+).

The protein resides in the cytoplasm. It carries out the reaction tRNA(Cys) + L-cysteine + ATP = L-cysteinyl-tRNA(Cys) + AMP + diphosphate. This is Cysteine--tRNA ligase from Brucella ovis (strain ATCC 25840 / 63/290 / NCTC 10512).